The sequence spans 655 residues: Proprotein convertase subtilisin/kexin type 4 (655 aa).

The N-terminal stretch at 1–26 (MRPSQTELWLGLTLTLALLAVRWASA) is a signal peptide. Residues 27–110 (QAPIYVSSWA…QQTLRRRVKR (84 aa)) constitute a propeptide that is removed on maturation. Residues 123–437 (QWYMNKEIQQ…YGLLDAGLLV (315 aa)) form the Peptidase S8 domain. Catalysis depends on charge relay system residues aspartate 155, histidine 196, and serine 370. In terms of domain architecture, P/Homo B spans 446–580 (TKPQKKCAIR…TLLLYGTAED (135 aa)). Asparagine 472 is a glycosylation site (N-linked (GlcNAc...) asparagine).

The protein belongs to the peptidase S8 family. Furin subfamily. The proPCSK4 form interacts with HSPA5; the interaction takes place at the endoplasmic reticulum. N-glycosylated. In terms of processing, synthesized in the endoplasmic reticulum as a zymogen, is matured by autocatalytic cleavage between the prodomain and the catalytic domain. Expressed abundantly in the testis since postnatal Day 16. In testis, strongly detected in round and elongated spermatids as well as spermatocytes. Also observed in residual bodies engulfed by Sertoli cells at spermatogenic stages VIII and IX. In ovaries, expressed in macrophage-like cells of the ovarian theca, interstitium and corpora lutea.

It localises to the cytoplasmic vesicle. Its subcellular location is the secretory vesicle. It is found in the acrosome membrane. Functionally, proprotein convertase involved in the processing of hormone and other protein precursors at sites comprised of pairs of basic amino acid residues. In males, important for ADAM2 processing as well as other acrosomal proteins with roles in fertilization and critical for normal fertilization events such as sperm capacitation, acrosome reaction and binding of sperm to zona pellucida. Also plays a role in female fertility, involved in the regulation of trophoblast migration and placental development, may be through the proteolytical processing and activation of proteins such as IGF2. May also participate in folliculogenesis in the ovaries. This Mus musculus (Mouse) protein is Proprotein convertase subtilisin/kexin type 4 (Pcsk4).